Reading from the N-terminus, the 70-residue chain is Turripeptide Ici9.2 (70 aa).

A signal peptide spans 1–20; sequence MKVYCLLLVLLVGLVSQAQG. The Kazal-like domain occupies 21-70; it reads QLDKKCQTMCTMEYLPVCGSDGTTYPNKCTLTSTACVNQMDITVLHNGEC. 3 disulfides stabilise this stretch: Cys-26–Cys-56, Cys-30–Cys-49, and Cys-38–Cys-70.

It belongs to the conopeptide P-like superfamily. In terms of tissue distribution, expressed by the venom duct.

The protein resides in the secreted. Functionally, acts as a neurotoxin by inhibiting an ion channel. May also act as a serine protease inhibitor, since it possess the kazal serine protease inhibitor signature. This Iotyrris cingulifera (Sea snail) protein is Turripeptide Ici9.2.